We begin with the raw amino-acid sequence, 225 residues long: MTVMAPVVTVDGPSGAGKGTLCKALAEALQWNLLDSGAIYRVLALAALHHHVDISSEDALVPLASHLDVRFVAEGGQLKVILEGEDVSHEIRTEAVGNTASQAAAFPRVREALLRRQRAFREAPGLIADGRDMGTVVFPDAPVKIFLDASAEERAQRRMLQLQGKGFNVNFERLLSEIKERDERDRNRPVAPLVPAADALVLDSTEMTIDEVIARALAYAREILA.

12–20 provides a ligand contact to ATP; that stretch reads GPSGAGKGT.

This sequence belongs to the cytidylate kinase family. Type 1 subfamily.

The protein localises to the cytoplasm. The catalysed reaction is CMP + ATP = CDP + ADP. It carries out the reaction dCMP + ATP = dCDP + ADP. This Pectobacterium carotovorum subsp. carotovorum (strain PC1) protein is Cytidylate kinase.